The chain runs to 117 residues: 5-hydroxyisourate hydrolase (117 aa).

Residues His7, Arg45, and Tyr114 each contribute to the substrate site.

It belongs to the transthyretin family. 5-hydroxyisourate hydrolase subfamily. As to quaternary structure, homotetramer.

The catalysed reaction is 5-hydroxyisourate + H2O = 5-hydroxy-2-oxo-4-ureido-2,5-dihydro-1H-imidazole-5-carboxylate + H(+). Functionally, catalyzes the hydrolysis of 5-hydroxyisourate (HIU) to 2-oxo-4-hydroxy-4-carboxy-5-ureidoimidazoline (OHCU). The protein is 5-hydroxyisourate hydrolase of Ralstonia nicotianae (strain ATCC BAA-1114 / GMI1000) (Ralstonia solanacearum).